The primary structure comprises 160 residues: S-protein homolog 13 (160 aa).

The signal sequence occupies residues Met-1–Ala-27.

The protein belongs to the plant self-incompatibility (S1) protein family.

The protein resides in the secreted. The sequence is that of S-protein homolog 13 from Arabidopsis thaliana (Mouse-ear cress).